We begin with the raw amino-acid sequence, 257 residues long: Na(+)-translocating NADH-quinone reductase subunit C (257 aa).

A helical transmembrane segment spans residues 13–33 (LTVVVLLSLICSLIVASAAVL). Threonine 224 carries the FMN phosphoryl threonine modification.

It belongs to the NqrC family. As to quaternary structure, composed of six subunits; NqrA, NqrB, NqrC, NqrD, NqrE and NqrF. FMN serves as cofactor.

Its subcellular location is the cell inner membrane. The catalysed reaction is a ubiquinone + n Na(+)(in) + NADH + H(+) = a ubiquinol + n Na(+)(out) + NAD(+). Functionally, NQR complex catalyzes the reduction of ubiquinone-1 to ubiquinol by two successive reactions, coupled with the transport of Na(+) ions from the cytoplasm to the periplasm. NqrA to NqrE are probably involved in the second step, the conversion of ubisemiquinone to ubiquinol. The chain is Na(+)-translocating NADH-quinone reductase subunit C from Haemophilus ducreyi (strain 35000HP / ATCC 700724).